The following is a 125-amino-acid chain: Small ribosomal subunit protein uS12 (125 aa).

The disordered stretch occupies residues 1–26 (MPTINQLVRKSRKTVKAQSDSPALKN). Position 89 is a 3-methylthioaspartic acid (D89).

Belongs to the universal ribosomal protein uS12 family. Part of the 30S ribosomal subunit. Contacts proteins S8 and S17. May interact with IF1 in the 30S initiation complex.

Functionally, with S4 and S5 plays an important role in translational accuracy. In terms of biological role, interacts with and stabilizes bases of the 16S rRNA that are involved in tRNA selection in the A site and with the mRNA backbone. Located at the interface of the 30S and 50S subunits, it traverses the body of the 30S subunit contacting proteins on the other side and probably holding the rRNA structure together. The combined cluster of proteins S8, S12 and S17 appears to hold together the shoulder and platform of the 30S subunit. The sequence is that of Small ribosomal subunit protein uS12 from Clostridium tetani (strain Massachusetts / E88).